The sequence spans 252 residues: 2-succinyl-6-hydroxy-2,4-cyclohexadiene-1-carboxylate synthase (252 aa).

The protein belongs to the AB hydrolase superfamily. MenH family. In terms of assembly, monomer.

It carries out the reaction 5-enolpyruvoyl-6-hydroxy-2-succinyl-cyclohex-3-ene-1-carboxylate = (1R,6R)-6-hydroxy-2-succinyl-cyclohexa-2,4-diene-1-carboxylate + pyruvate. Its pathway is quinol/quinone metabolism; 1,4-dihydroxy-2-naphthoate biosynthesis; 1,4-dihydroxy-2-naphthoate from chorismate: step 3/7. It participates in quinol/quinone metabolism; menaquinone biosynthesis. Catalyzes a proton abstraction reaction that results in 2,5-elimination of pyruvate from 2-succinyl-5-enolpyruvyl-6-hydroxy-3-cyclohexene-1-carboxylate (SEPHCHC) and the formation of 2-succinyl-6-hydroxy-2,4-cyclohexadiene-1-carboxylate (SHCHC). In Salmonella typhimurium (strain LT2 / SGSC1412 / ATCC 700720), this protein is 2-succinyl-6-hydroxy-2,4-cyclohexadiene-1-carboxylate synthase.